The chain runs to 322 residues: Transcriptional activator protein Pur-alpha (322 aa).

Residues 1–55 form a disordered region; it reads MADRDSGSEQGGAALGSGGSLGHPGSGSGSGGGGGGGGGGGGSGGGGGGAPGGLQ. Position 2 is an N-acetylalanine (Ala2). Residues 9-52 are compositionally biased toward gly residues; sequence EQGGAALGSGGSLGHPGSGSGSGGGGGGGGGGGGSGGGGGGAPG. The PUR repeat I repeat unit spans residues 60 to 125; sequence ELASKRVDIQ…DFIEHYAQLG (66 aa). One copy of the PUR repeat II repeat lies at 142 to 213; that stretch reads ALKSEFLVRE…KLIDDYGVEE (72 aa). Ser182 is modified (phosphoserine). The stretch at 215 to 281 is one PUR repeat III repeat; that stretch reads PAELPEGTSL…CKYSEEMKKI (67 aa). The span at 295-314 shows a compositional bias: low complexity; the sequence is LHQQQQQQQEETAAATLLLQ. Residues 295-322 form a disordered region; it reads LHQQQQQQQEETAAATLLLQGEEEGEED.

The protein belongs to the PUR DNA-binding protein family. Homodimer, heterodimer with PURB and heterotrimer with PURB and YBX1/Y-box protein 1. Interacts with FMR1; this interaction occurs in association with polyribosome.

Its subcellular location is the nucleus. In terms of biological role, this is a probable transcription activator that specifically binds the purine-rich single strand of the PUR element located upstream of the MYC gene. May play a role in the initiation of DNA replication and in recombination. The protein is Transcriptional activator protein Pur-alpha (PURA) of Homo sapiens (Human).